Here is a 91-residue protein sequence, read N- to C-terminus: Small ribosomal subunit protein uS19 (91 aa).

The protein belongs to the universal ribosomal protein uS19 family.

Functionally, protein S19 forms a complex with S13 that binds strongly to the 16S ribosomal RNA. The polypeptide is Small ribosomal subunit protein uS19 (Lachnospira eligens (strain ATCC 27750 / DSM 3376 / VPI C15-48 / C15-B4) (Eubacterium eligens)).